Consider the following 331-residue polypeptide: Gamma-parvin (331 aa).

At M1 the chain carries N-acetylmethionine. Residues 17-39 are disordered; that stretch reads EPPAEEELSKGGKKKYLPPTSRK. 2 consecutive Calponin-homology (CH) domains span residues 44–151 and 210–317; these read EELQ…KRFQ and NAVK…CKHT.

Belongs to the parvin family. In terms of assembly, interacts with ILK; the interaction promotes the establishment of cell polarity required for leukocyte migration. Interacts with ARHGEF6; the guanine nucleotide exchange factor activity of ARHGEF6 is essential for the PARVG-induced enhancement of cell spreading. As to expression, expressed predominantly in lymphoid organs, including spleen, thymus, lymph node, bone marrow and peripheral blood leukocytes and moderately in the digestive tract, including stomach, duodenum, jejunum, ileum, ileocecum and appendix, as well as in lung and liver. Also expressed in tumors, but at a lower level than in the corresponding normal tissues.

The protein resides in the cell junction. Its subcellular location is the focal adhesion. The protein localises to the cell membrane. It localises to the cytoplasm. It is found in the cytoskeleton. In terms of biological role, plays a role with ILK in promoting the cell adhesion and spreading of leukocytes. In Homo sapiens (Human), this protein is Gamma-parvin (PARVG).